Here is a 487-residue protein sequence, read N- to C-terminus: Glutamyl-tRNA(Gln) amidotransferase subunit A (487 aa).

Catalysis depends on charge relay system residues K79 and S154. Residue S178 is the Acyl-ester intermediate of the active site.

Belongs to the amidase family. GatA subfamily. As to quaternary structure, heterotrimer of A, B and C subunits.

It catalyses the reaction L-glutamyl-tRNA(Gln) + L-glutamine + ATP + H2O = L-glutaminyl-tRNA(Gln) + L-glutamate + ADP + phosphate + H(+). Functionally, allows the formation of correctly charged Gln-tRNA(Gln) through the transamidation of misacylated Glu-tRNA(Gln) in organisms which lack glutaminyl-tRNA synthetase. The reaction takes place in the presence of glutamine and ATP through an activated gamma-phospho-Glu-tRNA(Gln). This Roseiflexus sp. (strain RS-1) protein is Glutamyl-tRNA(Gln) amidotransferase subunit A.